Here is a 132-residue protein sequence, read N- to C-terminus: Large ribosomal subunit protein uL22 (132 aa).

This sequence belongs to the universal ribosomal protein uL22 family. As to quaternary structure, part of the 50S ribosomal subunit.

This protein binds specifically to 23S rRNA; its binding is stimulated by other ribosomal proteins, e.g. L4, L17, and L20. It is important during the early stages of 50S assembly. It makes multiple contacts with different domains of the 23S rRNA in the assembled 50S subunit and ribosome. Its function is as follows. The globular domain of the protein is located near the polypeptide exit tunnel on the outside of the subunit, while an extended beta-hairpin is found that lines the wall of the exit tunnel in the center of the 70S ribosome. In Rhodospirillum centenum (strain ATCC 51521 / SW), this protein is Large ribosomal subunit protein uL22.